A 119-amino-acid polypeptide reads, in one-letter code: Large ribosomal subunit protein uL18 (119 aa).

The interval 1–26 is disordered; sequence MGQNDKAARRQKIKLRSKTRGQGTAA. The span at 9–19 shows a compositional bias: basic residues; it reads RRQKIKLRSKT.

It belongs to the universal ribosomal protein uL18 family. As to quaternary structure, part of the 50S ribosomal subunit; part of the 5S rRNA/L5/L18/L25 subcomplex. Contacts the 5S and 23S rRNAs.

This is one of the proteins that bind and probably mediate the attachment of the 5S RNA into the large ribosomal subunit, where it forms part of the central protuberance. This chain is Large ribosomal subunit protein uL18, found in Prosthecochloris aestuarii (strain DSM 271 / SK 413).